The sequence spans 150 residues: Large ribosomal subunit protein uL15 (150 aa).

The tract at residues Met-1–Gly-55 is disordered. Residues Gln-8–Lys-32 are compositionally biased toward basic and acidic residues.

The protein belongs to the universal ribosomal protein uL15 family. Part of the 50S ribosomal subunit.

Its function is as follows. Binds to the 23S rRNA. The sequence is that of Large ribosomal subunit protein uL15 from Bifidobacterium longum (strain DJO10A).